Consider the following 501-residue polypeptide: Cytochrome P450 81F4 (501 aa).

Lys-245 participates in a covalent cross-link: Glycyl lysine isopeptide (Lys-Gly) (interchain with G-Cter in ubiquitin). The helical transmembrane segment at Ile-285 to Thr-305 threads the bilayer. Residue Cys-435 participates in heme binding.

Belongs to the cytochrome P450 family. The cofactor is heme.

The protein resides in the membrane. Its pathway is secondary metabolite biosynthesis. In terms of biological role, involved in indole glucosinolate biosynthesis. Catalyzes hydroxylation reactions of the glucosinolate indole ring. Converts indol-3-yl-methylglucosinolate (I3M) to 1-hydroxy-indol-3-yl-methylglucosinolate (1OH-I3M) intermediate. This hydroxy intermediates is converted to 1-methoxy-indol-3-yl-methylglucosinolate (1MO-I3M) by indole glucosinolate methyltransferase 1 and 2 (IGMT1 and IGMT2). In Arabidopsis thaliana (Mouse-ear cress), this protein is Cytochrome P450 81F4.